A 218-amino-acid polypeptide reads, in one-letter code: Adenylate kinase (218 aa).

10 to 15 provides a ligand contact to ATP; sequence GAGKGT. Positions 30 to 59 are NMP; the sequence is STGDMLRAAVKAGSPLGLKVKEVMATGGLV. Residues Thr-31, Arg-36, 57-59, 85-88, and Gln-92 contribute to the AMP site; these read GLV and GFPR. Positions 122-159 are LID; the sequence is GRRVHEASGRVYHVDYNPPKVEGKDDVTGEPLVQREDD. ATP-binding positions include Arg-123 and 132-133; that span reads VY. AMP contacts are provided by Arg-156 and Arg-167. Gly-203 serves as a coordination point for ATP.

The protein belongs to the adenylate kinase family. As to quaternary structure, monomer.

Its subcellular location is the cytoplasm. It carries out the reaction AMP + ATP = 2 ADP. Its pathway is purine metabolism; AMP biosynthesis via salvage pathway; AMP from ADP: step 1/1. In terms of biological role, catalyzes the reversible transfer of the terminal phosphate group between ATP and AMP. Plays an important role in cellular energy homeostasis and in adenine nucleotide metabolism. In Hahella chejuensis (strain KCTC 2396), this protein is Adenylate kinase.